We begin with the raw amino-acid sequence, 563 residues long: MLERMIDQGAGREPADIVLKGGRFFDLVTGELVESDIAICGDRIVGTFGNYQGKHEIDISGRIVVPGFIDTHLHIESSHVTPHEFDRCVLPQGVTTVICDPHEIANVLGAEGIKFFLDSALETVMDIRVQLSSCVPATHMETSGAELLIDDLLPFADHPKVIGLAEFMNFPGVLAKDPECMAKLKAFQGRHIDGHAPLLRGLDLNGYISAGIRTEHEATSAEEALEKMRKGMHVLVREGSVSKDLKALMPIITERHAQFLALCTDDRNPLDIADQGHLDYLIRTAIAGGVEPIAIYRAASVSAARAFGLFDRGLVAPGQRADLVVVDSLEGCHAEIVLSAGRVISEDLFAARKTVAPVGRNSVKASKVSASSFRSHSNSGKTRAIGIIPGKIITESLEFDLKVGPNGVEPDFEKDVVKIAVVERHGKNGNIATGFVHGFGLKSGAIASTVSHDSHNICVVGTSDEDIAAAANRLGEIEGGFVVVRDGKVLAEMPLPIAGLMSAEPYETVRDQLRVLRHAAEELGSVLEEPFLQLAFIALPVIPHLKITDRGLVDVDKFAFVGN.

It belongs to the metallo-dependent hydrolases superfamily. Adenine deaminase family. Mn(2+) serves as cofactor.

It carries out the reaction adenine + H2O + H(+) = hypoxanthine + NH4(+). In Brucella anthropi (strain ATCC 49188 / DSM 6882 / CCUG 24695 / JCM 21032 / LMG 3331 / NBRC 15819 / NCTC 12168 / Alc 37) (Ochrobactrum anthropi), this protein is Adenine deaminase.